Reading from the N-terminus, the 91-residue chain is B3 domain-containing protein Os03g0164300 (91 aa).

The TF-B3 DNA-binding region spans 1–91 (MTNAKMTFAV…VLVLKVHVLK (91 aa)).

Its subcellular location is the nucleus. This is B3 domain-containing protein Os03g0164300 from Oryza sativa subsp. japonica (Rice).